Consider the following 200-residue polypeptide: Small ribosomal subunit protein uS5 (200 aa).

The segment covering 1–12 (MGRPRTSQTRGQ) has biased composition (polar residues). Residues 1–49 (MGRPRTSQTRGQGPSGATGGNPRGGGSTTRERDARGARPGERDGGSEIQ) are disordered. Residues 13 to 27 (GPSGATGGNPRGGGS) show a composition bias toward gly residues. Over residues 29–49 (TRERDARGARPGERDGGSEIQ) the composition is skewed to basic and acidic residues. Positions 48–111 (IQDRVVQIRR…EKARHAMFDV (64 aa)) constitute an S5 DRBM domain.

This sequence belongs to the universal ribosomal protein uS5 family. Part of the 30S ribosomal subunit. Contacts proteins S4 and S8.

Functionally, with S4 and S12 plays an important role in translational accuracy. Its function is as follows. Located at the back of the 30S subunit body where it stabilizes the conformation of the head with respect to the body. This is Small ribosomal subunit protein uS5 from Rubrobacter xylanophilus (strain DSM 9941 / JCM 11954 / NBRC 16129 / PRD-1).